The primary structure comprises 309 residues: MPNETLHIDIGVCTYRRPELAETLRSLAAMNVPERARLRVIVADNDAEPSARALVEGLRPEMPFDILYVHCPHSNISIARNCCLDNSTGDFLAFLDDDETVSGDWLTRLLETARTTGAAAVLGPVRAHYGPTAPRWMRSGDFHSTLPVWAKGEIRTGYTCNALLRRDAASLLGRRFKLSLGKSGGEDTDFFTGMHCAGGTIAFSPEAWVHEPVPENRASLAWLAKRRFRSGQTHGRLLAEKAHGLRQAWNIALAGAKSGFCATAAVLCFPSAARRNRFALRAVLHAGVISGLLGLKEIEQYGAREVTSA.

The protein belongs to the glycosyltransferase 2 family.

Its subcellular location is the cell inner membrane. The protein operates within glycan metabolism; exopolysaccharide biosynthesis. Glycosyltransferase required for the synthesis of succinoglycan (EPS I). Needed for the addition of the fourth sugar (glucose), catalyzes the formation of a beta-1,4 linkage between the third acetylated sugar and the fourth sugar. The protein is Succinoglycan biosynthesis protein ExoM (exoM) of Rhizobium meliloti (strain 1021) (Ensifer meliloti).